The following is a 476-amino-acid chain: Methylenetetrahydrofolate--tRNA-(uracil-5-)-methyltransferase TrmFO (476 aa).

14 to 19 (GGGLAG) provides a ligand contact to FAD.

It belongs to the MnmG family. TrmFO subfamily. FAD is required as a cofactor.

The protein localises to the cytoplasm. It catalyses the reaction uridine(54) in tRNA + (6R)-5,10-methylene-5,6,7,8-tetrahydrofolate + NADH + H(+) = 5-methyluridine(54) in tRNA + (6S)-5,6,7,8-tetrahydrofolate + NAD(+). It carries out the reaction uridine(54) in tRNA + (6R)-5,10-methylene-5,6,7,8-tetrahydrofolate + NADPH + H(+) = 5-methyluridine(54) in tRNA + (6S)-5,6,7,8-tetrahydrofolate + NADP(+). Catalyzes the folate-dependent formation of 5-methyl-uridine at position 54 (M-5-U54) in all tRNAs. This is Methylenetetrahydrofolate--tRNA-(uracil-5-)-methyltransferase TrmFO from Brucella anthropi (strain ATCC 49188 / DSM 6882 / CCUG 24695 / JCM 21032 / LMG 3331 / NBRC 15819 / NCTC 12168 / Alc 37) (Ochrobactrum anthropi).